The primary structure comprises 155 residues: Probable calcium-binding protein CML9 (155 aa).

3 EF-hand domains span residues 8–43 (EQVD…LGQN), 86–121 (ATEK…HGDR), and 122–155 (LTEE…MNNK). Aspartate 21, aspartate 23, aspartate 25, arginine 27, and glutamate 32 together coordinate Ca(2+).

Potential calcium sensor. The sequence is that of Probable calcium-binding protein CML9 (CML9) from Oryza sativa subsp. japonica (Rice).